The sequence spans 343 residues: tRNA N6-adenosine threonylcarbamoyltransferase (343 aa).

2 residues coordinate Fe cation: histidine 115 and histidine 119. Substrate-binding positions include 138 to 142 (LVSGA), aspartate 171, glycine 184, and asparagine 276. Aspartate 304 contacts Fe cation.

It belongs to the KAE1 / TsaD family. Fe(2+) is required as a cofactor.

The protein resides in the cytoplasm. The catalysed reaction is L-threonylcarbamoyladenylate + adenosine(37) in tRNA = N(6)-L-threonylcarbamoyladenosine(37) in tRNA + AMP + H(+). In terms of biological role, required for the formation of a threonylcarbamoyl group on adenosine at position 37 (t(6)A37) in tRNAs that read codons beginning with adenine. Is involved in the transfer of the threonylcarbamoyl moiety of threonylcarbamoyl-AMP (TC-AMP) to the N6 group of A37, together with TsaE and TsaB. TsaD likely plays a direct catalytic role in this reaction. This Buchnera aphidicola subsp. Cinara cedri (strain Cc) protein is tRNA N6-adenosine threonylcarbamoyltransferase.